A 164-amino-acid polypeptide reads, in one-letter code: Peptidyl-prolyl cis-trans isomerase A (164 aa).

At Met-1 the chain carries N-acetylmethionine. Val-2 carries the post-translational modification N-acetylvaline; in Peptidyl-prolyl cis-trans isomerase A, N-terminally processed. In terms of domain architecture, PPIase cyclophilin-type spans Phe-7–Gln-163. An N6-acetyllysine; alternate modification is found at Lys-28. A Glycyl lysine isopeptide (Lys-Gly) (interchain with G-Cter in SUMO2); alternate cross-link involves residue Lys-28. A Glycyl lysine isopeptide (Lys-Gly) (interchain with G-Cter in ubiquitin); alternate cross-link involves residue Lys-28. An N6-acetyllysine mark is found at Lys-44 and Lys-76. Ser-77 bears the Phosphoserine mark. Lys-82 carries the N6-acetyllysine; alternate modification. A Glycyl lysine isopeptide (Lys-Gly) (interchain with G-Cter in SUMO2); alternate cross-link involves residue Lys-82. The residue at position 93 (Thr-93) is a Phosphothreonine. The N-linked (GlcNAc...) asparagine glycan is linked to Asn-108. N6-acetyllysine occurs at positions 125, 131, and 133.

The protein belongs to the cyclophilin-type PPIase family. PPIase A subfamily. As to quaternary structure, interacts with protein phosphatase PPP3CA/calcineurin A. Interacts with isoform 2 of BSG/CD147. Interacts with FOXO1; the interaction promotes FOXO1 dephosphorylation, nuclear accumulation and transcriptional activity. Interacts with integrin ITGA2B:ITGB3; the interaction is ROS and peptidyl-prolyl cis-trans isomerase (PPIase) activity-dependent and is increased in the presence of thrombin. Interacts with MAP3K5. Interacts with TARDBP; the interaction is dependent on the RNA-binding activity of TARDBP and the PPIase activity of PPIA/CYPA and the acetylation of PPIA/CYPA at Lys-125 favors the interaction. Interacts with HNRNPA1, HNRNPA2B1, HNRNPC, RBMX, HNRNPK and HNRNPM. In terms of processing, acetylation at Lys-125 markedly inhibits catalysis of cis to trans isomerization. PPIA acetylation also antagonizes the immunosuppressive effects of cyclosporine by inhibiting the sequential steps of cyclosporine binding and calcineurin inhibition. Acetylation at Lys-125 favors the interaction with TARDBP.

The protein localises to the cytoplasm. The protein resides in the secreted. Its subcellular location is the nucleus. The enzyme catalyses [protein]-peptidylproline (omega=180) = [protein]-peptidylproline (omega=0). With respect to regulation, binds cyclosporin A (CsA). CsA mediates some of its effects via an inhibitory action on PPIase. Its function is as follows. Catalyzes the cis-trans isomerization of proline imidic peptide bonds in oligopeptides. Exerts a strong chemotactic effect on leukocytes partly through activation of one of its membrane receptors BSG/CD147, initiating a signaling cascade that culminates in MAPK/ERK activation. Activates endothelial cells (ECs) in a proinflammatory manner by stimulating activation of NF-kappa-B and ERK, JNK and p38 MAP-kinases and by inducing expression of adhesion molecules including SELE and VCAM1. Induces apoptosis in ECs by promoting the FOXO1-dependent expression of CCL2 and BCL2L11 which are involved in EC chemotaxis and apoptosis. In response to oxidative stress, initiates proapoptotic and antiapoptotic signaling in ECs via activation of NF-kappa-B and AKT1 and up-regulation of antiapoptotic protein BCL2. Negatively regulates MAP3K5/ASK1 kinase activity, autophosphorylation and oxidative stress-induced apoptosis mediated by MAP3K5/ASK1. Necessary for the assembly of TARDBP in heterogeneous nuclear ribonucleoprotein (hnRNP) complexes and regulates TARDBP binding to RNA UG repeats and TARDBP-dependent expression of HDAC6, ATG7 and VCP which are involved in clearance of protein aggregates. Plays an important role in platelet activation and aggregation. Regulates calcium mobilization and integrin ITGA2B:ITGB3 bidirectional signaling via increased ROS production as well as by facilitating the interaction between integrin and the cell cytoskeleton. Binds heparan sulfate glycosaminoglycans. The chain is Peptidyl-prolyl cis-trans isomerase A (Ppia) from Rattus norvegicus (Rat).